The chain runs to 65 residues: Large ribosomal subunit protein bL35 (65 aa).

Residues 1–11 (MPKIKTRRSAA) show a composition bias toward basic residues. Residues 1 to 25 (MPKIKTRRSAAKRFSVTGSGKFRRR) are disordered.

It belongs to the bacterial ribosomal protein bL35 family.

This is Large ribosomal subunit protein bL35 from Nitratidesulfovibrio vulgaris (strain ATCC 29579 / DSM 644 / CCUG 34227 / NCIMB 8303 / VKM B-1760 / Hildenborough) (Desulfovibrio vulgaris).